An 853-amino-acid chain; its full sequence is Leucine-rich repeat and death domain-containing protein 1 (853 aa).

Residues 1–78 (MSEDGSNVEP…EEKNTGIPFS (78 aa)) form a disordered region. Positions 19 to 31 (LEEPGSEISDLLD) are enriched in acidic residues. Residues 56–65 (QSAASFTSQL) show a composition bias toward polar residues. 26 LRR repeats span residues 133–157 (MKSD…IVKV), 159–180 (YVKY…DPGD), 183–204 (GLEI…IQLF), 206–227 (NLKI…LLQL), 229–251 (NMRQ…EHLR), 252–274 (YLET…SSLK), 275–297 (NLRI…CFLP), 298–319 (KLNS…VREL), 321–342 (NLES…IFQL), 344–365 (KIKE…IENF), 367–388 (ELRL…ISHC), 390–411 (NLES…IRKL), 413–435 (NLRQ…SHLS), 436–457 (NIHI…IKNC), 459–481 (KITR…CALQ), 482–503 (SLDY…MSFS), 505–527 (QLLH…CSLT), 528–549 (NLEY…ISAM), 551–573 (SLHV…CSLK), 574–596 (NLRV…SKLK), 597–618 (RIQK…LCQL), 620–641 (TLEE…PEEV), 646–668 (QLKI…GELR), 669–690 (SLVS…FLSL), 692–713 (VLQS…IYKL), and 715–736 (SLKE…ICKG). Residues 757 to 845 (LEKIFNIVAN…DIMDKITALN (89 aa)) enclose the Death domain.

This Mus musculus (Mouse) protein is Leucine-rich repeat and death domain-containing protein 1 (Lrrd1).